A 209-amino-acid polypeptide reads, in one-letter code: Large ribosomal subunit protein uL3 (209 aa).

Residue Gln150 is modified to N5-methylglutamine.

This sequence belongs to the universal ribosomal protein uL3 family. In terms of assembly, part of the 50S ribosomal subunit. Forms a cluster with proteins L14 and L19. Methylated by PrmB.

In terms of biological role, one of the primary rRNA binding proteins, it binds directly near the 3'-end of the 23S rRNA, where it nucleates assembly of the 50S subunit. In Vibrio vulnificus (strain CMCP6), this protein is Large ribosomal subunit protein uL3.